A 250-amino-acid chain; its full sequence is Small ribosomal subunit protein uS2 (250 aa).

Belongs to the universal ribosomal protein uS2 family.

The chain is Small ribosomal subunit protein uS2 from Paracidovorax citrulli (strain AAC00-1) (Acidovorax citrulli).